A 63-amino-acid chain; its full sequence is Large ribosomal subunit protein bL28 (63 aa).

Belongs to the bacterial ribosomal protein bL28 family.

This is Large ribosomal subunit protein bL28 from Desulfitobacterium hafniense (strain DSM 10664 / DCB-2).